The sequence spans 786 residues: LPS-assembly protein LptD (786 aa).

The N-terminal stretch at 1-24 (MKKRIPTLLATMIASALYSHQGLA) is a signal peptide. Cystine bridges form between C31/C726 and C173/C727.

Belongs to the LptD family. As to quaternary structure, component of the lipopolysaccharide transport and assembly complex. Interacts with LptE and LptA. Post-translationally, contains two intramolecular disulfide bonds.

It is found in the cell outer membrane. Its function is as follows. Together with LptE, is involved in the assembly of lipopolysaccharide (LPS) at the surface of the outer membrane. This chain is LPS-assembly protein LptD, found in Salmonella choleraesuis (strain SC-B67).